The sequence spans 78 residues: Large ribosomal subunit protein bL28B (78 aa).

The protein belongs to the bacterial ribosomal protein bL28 family.

This chain is Large ribosomal subunit protein bL28B (rpmB2), found in Streptomyces coelicolor (strain ATCC BAA-471 / A3(2) / M145).